Reading from the N-terminus, the 150-residue chain is Translation machinery-associated protein 17 (150 aa).

Phosphoserine is present on residues serine 24 and serine 68. A disordered region spans residues 110-139 (RKTGHGKSKHEVEAKDNTNKGPDVDMDNSN). The segment covering 118 to 127 (KHEVEAKDNT) has biased composition (basic and acidic residues).

Interacts with RPT6. Interacts with the 40S and 60S ribosomal subunits.

Its subcellular location is the cytoplasm. The protein localises to the nucleus. Functionally, ATPase-dedicated chaperone that assists the formation of the RPT6-RPT3 ATPase pair, an early step in proteasome assembly. Plays a key role in maintaining homeostatic proteasome levels and adjusting proteasome assembly when demands increase, such as during proteasome stresses. Function overlaps with RPN14. This Saccharomyces cerevisiae (strain ATCC 204508 / S288c) (Baker's yeast) protein is Translation machinery-associated protein 17 (TMA17).